Reading from the N-terminus, the 465-residue chain is UDP-N-acetylmuramoylalanine--D-glutamate ligase (465 aa).

127–133 is an ATP binding site; it reads GSNGKST.

The protein belongs to the MurCDEF family.

It is found in the cytoplasm. It catalyses the reaction UDP-N-acetyl-alpha-D-muramoyl-L-alanine + D-glutamate + ATP = UDP-N-acetyl-alpha-D-muramoyl-L-alanyl-D-glutamate + ADP + phosphate + H(+). It functions in the pathway cell wall biogenesis; peptidoglycan biosynthesis. In terms of biological role, cell wall formation. Catalyzes the addition of glutamate to the nucleotide precursor UDP-N-acetylmuramoyl-L-alanine (UMA). The protein is UDP-N-acetylmuramoylalanine--D-glutamate ligase of Cereibacter sphaeroides (strain ATCC 17029 / ATH 2.4.9) (Rhodobacter sphaeroides).